A 273-amino-acid polypeptide reads, in one-letter code: Diaminopimelate epimerase (273 aa).

Positions 11 and 60 each coordinate substrate. Catalysis depends on C69, which acts as the Proton donor. Substrate-binding positions include 70–71 (GN), N181, and 199–200 (ER). The active-site Proton acceptor is C209. 210–211 (GT) serves as a coordination point for substrate.

The protein belongs to the diaminopimelate epimerase family. As to quaternary structure, homodimer.

It is found in the cytoplasm. It carries out the reaction (2S,6S)-2,6-diaminopimelate = meso-2,6-diaminopimelate. It functions in the pathway amino-acid biosynthesis; L-lysine biosynthesis via DAP pathway; DL-2,6-diaminopimelate from LL-2,6-diaminopimelate: step 1/1. In terms of biological role, catalyzes the stereoinversion of LL-2,6-diaminopimelate (L,L-DAP) to meso-diaminopimelate (meso-DAP), a precursor of L-lysine and an essential component of the bacterial peptidoglycan. In Helicobacter pylori (strain ATCC 700392 / 26695) (Campylobacter pylori), this protein is Diaminopimelate epimerase.